Reading from the N-terminus, the 1720-residue chain is TOG array regulator of axonemal microtubules protein 1 (1720 aa).

TOG regions lie at residues 94–312 (EEDT…RRLE) and 352–596 (PQEL…MPSS). 8 HEAT repeats span residues 175-212 (AFSL…RSPG), 214-247 (VLRT…TEDL), 251-289 (LDLT…RLGQ), 345-384 (NLKF…KFNP), 390-427 (SSLV…RLGE), 431-466 (QFLG…MKEV), 467-504 (GPQQ…YPSE), and 506-543 (FDLP…SMGS). Polar residues-rich tracts occupy residues 794 to 809 (FGSQ…QNPS), 819 to 829 (PVSSPRTSPKH), 842 to 852 (DNSVNFSNSWP), and 868 to 877 (LVSQKSSDPT). 3 disordered regions span residues 794-924 (FGSQ…SLLP), 970-998 (HSSL…ESPD), and 1067-1087 (KKIS…NPQQ). Residues 1073–1087 (AEQSPSAGSSSNPQQ) show a composition bias toward polar residues. The interval 1256–1425 (EIALTEALRL…YIKDSVRNLQ (170 aa)) is TOG 3. 2 HEAT repeats span residues 1294-1331 (TKLH…YLKK) and 1335-1372 (QELD…NVTP). The disordered stretch occupies residues 1430 to 1462 (GEIPLDTPSAKGRRSHTGSVGNTRSSSVSRDAF). Residues 1446–1458 (TGSVGNTRSSSVS) show a composition bias toward polar residues. The interval 1484 to 1720 (SLESAEYLKL…LLDMTILNEL (237 aa)) is TOG 4. HEAT repeat units follow at residues 1485–1522 (LESA…NNQD), 1526–1563 (GNIV…LLRD), and 1567–1605 (PIIN…HVDN).

It belongs to the Crescerin family. As to quaternary structure, interacts with ARMC9, CCDC66, CEP104 and CSPP1.

It localises to the cell projection. It is found in the cilium. Its subcellular location is the cytoplasm. The protein localises to the cytoskeleton. The protein resides in the cilium axoneme. Functionally, involved in ciliogenesis. It is required for appropriate acetylation and polyglutamylation of ciliary microtubules, and regulation of cilium length. Interacts with microtubules and promotes microtubule polymerization via its HEAT repeat domains, especially those in TOG region 2 and 4. This Homo sapiens (Human) protein is TOG array regulator of axonemal microtubules protein 1.